Here is a 369-residue protein sequence, read N- to C-terminus: Delta(14)-sterol reductase (369 aa).

7 helical membrane passes run Gln15 to Leu34, Cys54 to Val76, Leu86 to Val105, Phe146 to Val168, Ile178 to Glu195, Arg208 to Trp230, and Thr240 to Asn262. NADP(+) contacts are provided by residues Lys265, Lys269, Leu289, Trp294, and Asn301–Tyr302. A helical transmembrane segment spans residues Pro275–Ala297. The chain crosses the membrane as a helical span at residues Gly317–Trp336. Residues Asp341, Cys345–Tyr349, and Tyr356 each bind NADP(+).

Belongs to the ERG4/ERG24 family.

It is found in the membrane. It carries out the reaction 4,4-dimethyl-5alpha-cholesta-8,24-dien-3beta-ol + NADP(+) = 4,4-dimethyl-5alpha-cholesta-8,14,24-trien-3beta-ol + NADPH + H(+). It functions in the pathway steroid biosynthesis; zymosterol biosynthesis; zymosterol from lanosterol: step 2/6. In terms of biological role, reduces the C14=C15 double bond of 4,4-dimethyl-cholesta-8,14,24-trienol to produce 4,4-dimethyl-cholesta-8,24-dienol. Required for cell division and expansion and is involved in proper organization of the embryo. The sequence is that of Delta(14)-sterol reductase (FK) from Arabidopsis thaliana (Mouse-ear cress).